The primary structure comprises 295 residues: Phosphatidylserine decarboxylase proenzyme (295 aa).

Active-site charge relay system; for autoendoproteolytic cleavage activity residues include Asp113, His169, and Ser256. The Schiff-base intermediate with substrate; via pyruvic acid; for decarboxylase activity role is filled by Ser256. Ser256 carries the pyruvic acid (Ser); by autocatalysis modification.

It belongs to the phosphatidylserine decarboxylase family. PSD-B subfamily. Prokaryotic type II sub-subfamily. In terms of assembly, heterodimer of a large membrane-associated beta subunit and a small pyruvoyl-containing alpha subunit. It depends on pyruvate as a cofactor. Is synthesized initially as an inactive proenzyme. Formation of the active enzyme involves a self-maturation process in which the active site pyruvoyl group is generated from an internal serine residue via an autocatalytic post-translational modification. Two non-identical subunits are generated from the proenzyme in this reaction, and the pyruvate is formed at the N-terminus of the alpha chain, which is derived from the carboxyl end of the proenzyme. The autoendoproteolytic cleavage occurs by a canonical serine protease mechanism, in which the side chain hydroxyl group of the serine supplies its oxygen atom to form the C-terminus of the beta chain, while the remainder of the serine residue undergoes an oxidative deamination to produce ammonia and the pyruvoyl prosthetic group on the alpha chain. During this reaction, the Ser that is part of the protease active site of the proenzyme becomes the pyruvoyl prosthetic group, which constitutes an essential element of the active site of the mature decarboxylase.

Its subcellular location is the cell membrane. It carries out the reaction a 1,2-diacyl-sn-glycero-3-phospho-L-serine + H(+) = a 1,2-diacyl-sn-glycero-3-phosphoethanolamine + CO2. Its pathway is phospholipid metabolism; phosphatidylethanolamine biosynthesis; phosphatidylethanolamine from CDP-diacylglycerol: step 2/2. Its function is as follows. Catalyzes the formation of phosphatidylethanolamine (PtdEtn) from phosphatidylserine (PtdSer). In Clostridium botulinum (strain Langeland / NCTC 10281 / Type F), this protein is Phosphatidylserine decarboxylase proenzyme.